The chain runs to 690 residues: Calpain-9 (690 aa).

Positions 1–23 are disordered; sequence MPYLHRSLRPQPQPVPGDARTIH. A Calpain catalytic domain is found at 42 to 337; that stretch reads LFEDADFPAS…FDKVEICNLT (296 aa). The Ca(2+) site is built by L81, G83, and D88. C97 is an active-site residue. Residue E167 coordinates Ca(2+). Residues H254 and N278 contribute to the active site. Ca(2+) contacts are provided by E284, D291, L312, D314, and E316. Residues 338-521 are domain III; it reads PDALEDSALH…PQEEETEEEQ (184 aa). 3 EF-hand domains span residues 518-552, 561-589, and 591-626; these read EEEQQFRALFQRVAGEDMEVSAEELEYVLNAVLQK, LSLLSCRNIISLMDTSGNGKLEFEEFRVF, and DKLKHWMDLFLQFDVDKSGTMSSYELRTALKAAGFQ. The domain IV stretch occupies residues 522–690; that stretch reads QFRALFQRVA…NEFISLTMNI (169 aa). Residues D574, S576, N578, K580, E585, D604, D606, S608, T610, and E615 each contribute to the Ca(2+) site.

It belongs to the peptidase C2 family. In terms of tissue distribution, predominantly expressed in stomach and small intestine, although low levels of expression in other organs.

It localises to the cytoplasm. Calcium-regulated non-lysosomal thiol-protease. This Mus musculus (Mouse) protein is Calpain-9 (Capn9).